The following is a 497-amino-acid chain: Cytochrome P450 98A8 (497 aa).

Residues 2 to 19 (IIYLISLLPIIVATLMLY) traverse the membrane as a helical segment. Residue Cys-431 coordinates heme.

This sequence belongs to the cytochrome P450 family. It depends on heme as a cofactor. As to expression, strongly expressed in inflorescence tips, young flower buds, seeds, stamen, tapetum and pollen.

It is found in the membrane. Functionally, acts redundantly with CYP98A9 as tricoumaroylspermidine meta-hydroxylase. Also catalyzes the meta-hydroxylation of the three triferuloylspermidine phenolic rings. Unable to use 5-O-(4-coumaroyl) D-quinate or 5-O-(4-coumaroyl) shikimate as substrates. The protein is Cytochrome P450 98A8 (CYP98A8) of Arabidopsis thaliana (Mouse-ear cress).